The sequence spans 617 residues: V-type proton ATPase catalytic subunit A (617 aa).

Residue 257-264 (GAFGCGKT) participates in ATP binding.

It belongs to the ATPase alpha/beta chains family. In terms of assembly, V-ATPase is a heteromultimeric enzyme composed of a peripheral catalytic V1 complex (components A to H) attached to an integral membrane V0 proton pore complex (components: a, c, c', c'', d, e, f and VOA1).

The protein localises to the vacuole membrane. The enzyme catalyses ATP + H2O + 4 H(+)(in) = ADP + phosphate + 5 H(+)(out). Catalytic subunit of the V1 complex of vacuolar(H+)-ATPase (V-ATPase), a multisubunit enzyme composed of a peripheral complex (V1) that hydrolyzes ATP and a membrane integral complex (V0) that translocates protons. V-ATPase is responsible for acidifying and maintaining the pH of intracellular compartments. This is V-type proton ATPase catalytic subunit A (VMA1) from Eremothecium gossypii (strain ATCC 10895 / CBS 109.51 / FGSC 9923 / NRRL Y-1056) (Yeast).